Consider the following 262-residue polypeptide: Aminoglycoside 3'-phosphotransferase (262 aa).

Asp-187 acts as the Proton acceptor in catalysis.

Belongs to the aminoglycoside phosphotransferase family. Monomer.

It localises to the cytoplasm. The enzyme catalyses kanamycin A + ATP = kanamycin 3'-phosphate + ADP + H(+). In terms of biological role, resistance to butirosin and structurally-related aminoglycosides, including kanamycin and amikacin. This chain is Aminoglycoside 3'-phosphotransferase, found in Niallia circulans (Bacillus circulans).